The following is a 328-amino-acid chain: GTP 3',8-cyclase (328 aa).

The 229-residue stretch at 1–229 (MNQVDYLRIS…ESQVRGAGPA (229 aa)) folds into the Radical SAM core domain. GTP is bound at residue Arg8. [4Fe-4S] cluster contacts are provided by Cys15 and Cys19. An S-adenosyl-L-methionine-binding site is contributed by Tyr21. Residue Cys22 participates in [4Fe-4S] cluster binding. Arg60 is a binding site for GTP. Position 64 (Gly64) interacts with S-adenosyl-L-methionine. Thr91 contributes to the GTP binding site. Position 115 (Ser115) interacts with S-adenosyl-L-methionine. A GTP-binding site is contributed by Lys155. Met189 contacts S-adenosyl-L-methionine. Cys252 and Cys255 together coordinate [4Fe-4S] cluster. Residue 257–259 (RMR) participates in GTP binding. Cys269 is a [4Fe-4S] cluster binding site.

The protein belongs to the radical SAM superfamily. MoaA family. As to quaternary structure, monomer and homodimer. [4Fe-4S] cluster is required as a cofactor.

The catalysed reaction is GTP + AH2 + S-adenosyl-L-methionine = (8S)-3',8-cyclo-7,8-dihydroguanosine 5'-triphosphate + 5'-deoxyadenosine + L-methionine + A + H(+). It participates in cofactor biosynthesis; molybdopterin biosynthesis. Its function is as follows. Catalyzes the cyclization of GTP to (8S)-3',8-cyclo-7,8-dihydroguanosine 5'-triphosphate. This Nostoc punctiforme (strain ATCC 29133 / PCC 73102) protein is GTP 3',8-cyclase.